The chain runs to 1272 residues: AF4/FMR2 family member 2 (1272 aa).

Disordered regions lie at residues 151–190 (SNRKSKSEWPRDSHNTSPAQASQTSSQPNKMQTSTQDPPQ), 204–231 (PQIGTVEKSNPSSKEENNPNSGGEDTFK), 372–401 (TLQKWSDPSSRASTKMLEDDLKLSSDEDDL), 422–497 (KAKP…QLDK), 557–694 (IREK…ETLQ), 715–743 (TLSTLTNGNSNNLSTSNEETAFSPPPAMQ), and 772–899 (PGQN…QDKN). Residues 155 to 164 (SKSEWPRDSH) show a composition bias toward basic and acidic residues. Over residues 165–179 (NTSPAQASQTSSQPN) the composition is skewed to low complexity. Residues 180–189 (KMQTSTQDPP) show a composition bias toward polar residues. Low complexity predominate over residues 210–227 (EKSNPSSKEENNPNSGGE). The span at 374–384 (QKWSDPSSRAS) shows a compositional bias: polar residues. The span at 387–396 (MLEDDLKLSS) shows a compositional bias: basic and acidic residues. Residue serine 395 is modified to Phosphoserine. A compositionally biased stretch (polar residues) spans 436–450 (TPQSTPATQTNVGSG). Threonine 482 carries the phosphothreonine modification. Residues 580-590 (STSVDTVSQRT) are compositionally biased toward polar residues. Residues 620–633 (PKEKGSVELPDPPR) are compositionally biased toward basic and acidic residues. The segment covering 634-644 (SRNKATAHKPV) has biased composition (basic residues). Positions 715–734 (TLSTLTNGNSNNLSTSNEET) are enriched in low complexity. A compositionally biased stretch (basic and acidic residues) spans 815–831 (PAETAEKIPEKKQRLED). A compositionally biased stretch (pro residues) spans 841–850 (CISPAPPHKP). Residues 887–899 (VSGNNGHFGQDKN) are compositionally biased toward polar residues.

This sequence belongs to the AF4 family. Highly expressed in the hippocampus, the piriform cortex, Purkinje cells and the cingulate gyrus.

It localises to the nucleus speckle. Its function is as follows. RNA-binding protein. Might be involved in alternative splicing regulation through an interaction with G-quartet RNA structure. The sequence is that of AF4/FMR2 family member 2 from Mus musculus (Mouse).